Consider the following 605-residue polypeptide: Alpha-1,3-galactosidase A (605 aa).

An N-terminal signal peptide occupies residues 1-20 (MKKYLHILPACFLFYAAAHA). PbH1 repeat units lie at residues 256–278 (SKNI…VSQY), 312–334 (KGKV…NVHG), 421–443 (TPEV…LVTT), 444–466 (PRKV…LIEA), 477–507 (VKDV…HPSN), and 517–547 (HQNI…LFRN).

It belongs to the glycosyl hydrolase 110 family. A subfamily.

It catalyses the reaction Hydrolysis of terminal, non-reducing branched (1-&gt;3)-alpha-D-galactosidic residues, producing free D-galactose.. The catalysed reaction is Hydrolysis of terminal, non-reducing alpha-D-galactose residues in alpha-D-galactosides, including galactose oligosaccharides, galactomannans and galactolipids.. In terms of biological role, alpha-galactosidase that specifically removes branched alpha-1,3-linked galactose residues present in blood group B antigens. Has no activity toward linear alpha-1,3-linked galactose residues. This is Alpha-1,3-galactosidase A (glaA) from Bacteroides fragilis (strain YCH46).